The following is a 360-amino-acid chain: Tubulin-like protein CetZ2 (360 aa).

Residues 10–14 (QAGGK), 65–66 (GG), 106–108 (GSG), Glu-138, Asn-165, and Asn-183 contribute to the GTP site. Basic and acidic residues predominate over residues 334-354 (EAIDKAETEPREDPKGMWHSD). Residues 334–360 (EAIDKAETEPREDPKGMWHSDDLDDLL) form a disordered region.

Belongs to the CetZ family.

It localises to the cytoplasm. In terms of biological role, involved in cell shape control. This is Tubulin-like protein CetZ2 from Haloferax volcanii (strain ATCC 29605 / DSM 3757 / JCM 8879 / NBRC 14742 / NCIMB 2012 / VKM B-1768 / DS2) (Halobacterium volcanii).